The sequence spans 287 residues: Pyridoxal kinase PdxY (287 aa).

Residues Ser-10 and 45 to 46 (TQ) contribute to the substrate site. Residues Asp-112, Ala-144, Glu-149, Lys-182, and 209-212 (RPLV) contribute to the ATP site. Residue Asp-224 coordinates substrate.

Belongs to the pyridoxine kinase family. PdxY subfamily. As to quaternary structure, homodimer. Requires Mg(2+) as cofactor.

It catalyses the reaction pyridoxal + ATP = pyridoxal 5'-phosphate + ADP + H(+). The protein operates within cofactor metabolism; pyridoxal 5'-phosphate salvage; pyridoxal 5'-phosphate from pyridoxal: step 1/1. Pyridoxal kinase involved in the salvage pathway of pyridoxal 5'-phosphate (PLP). Catalyzes the phosphorylation of pyridoxal to PLP. The polypeptide is Pyridoxal kinase PdxY (Shigella boydii serotype 4 (strain Sb227)).